Reading from the N-terminus, the 739-residue chain is NAD(P)H-quinone oxidoreductase subunit 5, chloroplastic (739 aa).

16 helical membrane passes run 9-29, 39-59, 89-109, 125-145, 147-167, 185-205, 219-239, 258-278, 280-300, 327-347, 354-374, 396-416, 425-445, 542-562, 610-630, and 719-739; these read WVIP…LILI, IWAF…VQLS, IDPL…LVLI, FVYI…SNLI, IYFF…FWFT, GDFG…SLEF, NGIN…GAVA, TPIS…FLLA, LLPL…VGTI, LGYM…FHLI, ALLF…VGYS, TTFL…CFWS, WLYS…TAFY, LFPL…GISF, TLAI…YSFF, and ISSY…FFLS.

This sequence belongs to the complex I subunit 5 family. In terms of assembly, NDH is composed of at least 16 different subunits, 5 of which are encoded in the nucleus.

The protein resides in the plastid. It is found in the chloroplast thylakoid membrane. It catalyses the reaction a plastoquinone + NADH + (n+1) H(+)(in) = a plastoquinol + NAD(+) + n H(+)(out). The catalysed reaction is a plastoquinone + NADPH + (n+1) H(+)(in) = a plastoquinol + NADP(+) + n H(+)(out). NDH shuttles electrons from NAD(P)H:plastoquinone, via FMN and iron-sulfur (Fe-S) centers, to quinones in the photosynthetic chain and possibly in a chloroplast respiratory chain. The immediate electron acceptor for the enzyme in this species is believed to be plastoquinone. Couples the redox reaction to proton translocation, and thus conserves the redox energy in a proton gradient. In Hordeum vulgare (Barley), this protein is NAD(P)H-quinone oxidoreductase subunit 5, chloroplastic (ndhF).